Reading from the N-terminus, the 132-residue chain is ATP synthase epsilon chain (132 aa).

It belongs to the ATPase epsilon chain family. As to quaternary structure, F-type ATPases have 2 components, CF(1) - the catalytic core - and CF(0) - the membrane proton channel. CF(1) has five subunits: alpha(3), beta(3), gamma(1), delta(1), epsilon(1). CF(0) has three main subunits: a, b and c.

The protein localises to the cell membrane. Its function is as follows. Produces ATP from ADP in the presence of a proton gradient across the membrane. The sequence is that of ATP synthase epsilon chain (atpC) from Geobacillus stearothermophilus (Bacillus stearothermophilus).